A 276-amino-acid chain; its full sequence is Diaminopimelate epimerase (276 aa).

Asparagine 13, glutamine 46, and asparagine 66 together coordinate substrate. Cysteine 75 functions as the Proton donor in the catalytic mechanism. Substrate is bound by residues 76–77, asparagine 159, asparagine 192, and 210–211; these read GN and ER. Residue cysteine 219 is the Proton acceptor of the active site. A substrate-binding site is contributed by 220–221; sequence GS.

Belongs to the diaminopimelate epimerase family. Homodimer.

It is found in the cytoplasm. The enzyme catalyses (2S,6S)-2,6-diaminopimelate = meso-2,6-diaminopimelate. It participates in amino-acid biosynthesis; L-lysine biosynthesis via DAP pathway; DL-2,6-diaminopimelate from LL-2,6-diaminopimelate: step 1/1. Catalyzes the stereoinversion of LL-2,6-diaminopimelate (L,L-DAP) to meso-diaminopimelate (meso-DAP), a precursor of L-lysine and an essential component of the bacterial peptidoglycan. This chain is Diaminopimelate epimerase, found in Vibrio parahaemolyticus serotype O3:K6 (strain RIMD 2210633).